The chain runs to 156 residues: Small ribosomal subunit protein uS7 (156 aa).

This sequence belongs to the universal ribosomal protein uS7 family. As to quaternary structure, part of the 30S ribosomal subunit. Contacts proteins S9 and S11.

One of the primary rRNA binding proteins, it binds directly to 16S rRNA where it nucleates assembly of the head domain of the 30S subunit. Is located at the subunit interface close to the decoding center, probably blocks exit of the E-site tRNA. In Allorhizobium ampelinum (strain ATCC BAA-846 / DSM 112012 / S4) (Agrobacterium vitis (strain S4)), this protein is Small ribosomal subunit protein uS7.